The following is a 298-amino-acid chain: Inosose dehydratase (298 aa).

Belongs to the IolE/MocC family. The cofactor is glutathione. Requires Co(2+) as cofactor. It depends on Mn(2+) as a cofactor.

It carries out the reaction scyllo-inosose = 3D-3,5/4-trihydroxycyclohexane-1,2-dione + H2O. In terms of biological role, catalyzes the dehydration of inosose (2-keto-myo-inositol, 2KMI or 2,4,6/3,5-pentahydroxycyclohexanone) to 3D-(3,5/4)-trihydroxycyclohexane-1,2-dione (D-2,3-diketo-4-deoxy-epi-inositol). This chain is Inosose dehydratase, found in Glaesserella parasuis serovar 5 (strain SH0165) (Haemophilus parasuis).